A 214-amino-acid polypeptide reads, in one-letter code: Thymidylate kinase (214 aa).

10 to 17 (GPDGAGKT) provides a ligand contact to ATP.

Belongs to the thymidylate kinase family.

The enzyme catalyses dTMP + ATP = dTDP + ADP. Its function is as follows. Phosphorylation of dTMP to form dTDP in both de novo and salvage pathways of dTTP synthesis. The chain is Thymidylate kinase from Latilactobacillus sakei subsp. sakei (strain 23K) (Lactobacillus sakei subsp. sakei).